The chain runs to 572 residues: uncharacterized protein (572 aa).

The segment at 13 to 45 is disordered; that stretch reads ALIAKPKGKTVSGDGADPKKRGRPKKNATEPAV. Residues 177–204 are a coiled coil; it reads VLTKEMEEKLEALDRDMRTAEETKVSIA.

This is an uncharacterized protein from Dryophytes versicolor (chameleon treefrog).